The following is a 208-amino-acid chain: 2-phospho-L-lactate guanylyltransferase (208 aa).

The protein belongs to the CofC family. As to quaternary structure, homodimer.

It carries out the reaction (2S)-2-phospholactate + GTP + H(+) = (2S)-lactyl-2-diphospho-5'-guanosine + diphosphate. It functions in the pathway cofactor biosynthesis; coenzyme F420 biosynthesis. Functionally, guanylyltransferase that catalyzes the activation of (2S)-2-phospholactate (2-PL) as (2S)-lactyl-2-diphospho-5'-guanosine, via the condensation of 2-PL with GTP. It is involved in the biosynthesis of coenzyme F420, a hydride carrier cofactor. The protein is 2-phospho-L-lactate guanylyltransferase of Methanosarcina acetivorans (strain ATCC 35395 / DSM 2834 / JCM 12185 / C2A).